A 561-amino-acid polypeptide reads, in one-letter code: Nucleoprotein (561 aa).

Positions 52–237 are binding site for the cap structure m7GTP; that stretch reads VRKDKRTDSD…ISHEPSALNI (186 aa). The interval 336-355 is disordered; that stretch reads SKPSAIQPPVRNGGSPDLKQ. Residues D380 and E382 each coordinate Mn(2+). Residues E390, C497, H500, and C521 each contribute to the Zn(2+) site. D525 contributes to the Mn(2+) binding site.

It belongs to the arenaviridae nucleocapsid protein family. Homomultimerizes to form the nucleocapsid. Binds to viral genomic RNA. Interacts with glycoprotein G2. Interacts with protein Z; this interaction probably directs the encapsidated genome to budding sites. Interacts with protein L; this interaction does not interfere with Z-L interaction. Interacts with host IKBKE (via Protein kinase domain); the interaction inhibits IKBKE kinase activity.

The protein localises to the virion. It is found in the host cytoplasm. Functionally, encapsidates the genome, protecting it from nucleases. The encapsidated genomic RNA is termed the nucleocapsid (NC). Serves as template for viral transcription and replication. The increased presence of protein N in host cell does not seem to trigger the switch from transcription to replication as observed in other negative strain RNA viruses. Through the interaction with host IKBKE, strongly inhibits the phosphorylation and nuclear translocation of host IRF3, a protein involved in interferon activation pathway, leading to the inhibition of interferon-beta and IRF3-dependent promoters activation. Also encodes a functional 3'-5' exoribonuclease that degrades preferentially dsRNA substrates and thereby participates in the suppression of interferon induction. In Cavia cutleri (Guinea pig), this protein is Nucleoprotein.